The following is a 489-amino-acid chain: Lysine--tRNA ligase (489 aa).

Residues E398 and E405 each contribute to the Mg(2+) site.

Belongs to the class-II aminoacyl-tRNA synthetase family. In terms of assembly, homodimer. The cofactor is Mg(2+).

It is found in the cytoplasm. The enzyme catalyses tRNA(Lys) + L-lysine + ATP = L-lysyl-tRNA(Lys) + AMP + diphosphate. This is Lysine--tRNA ligase from Moorella thermoacetica (strain ATCC 39073 / JCM 9320).